A 291-amino-acid polypeptide reads, in one-letter code: Gamma-gliadin B (291 aa).

Residues 1–19 form the signal peptide; the sequence is MKTLLILTILAMAITIATA. Low complexity predominate over residues 38–81; the sequence is LQPHQPFSQQPQQIFPQPQQTFPHQPQQQFPQPQQPQQQFLQPR. The segment at 38-137 is disordered; the sequence is LQPHQPFSQQ…QSFPQQQPSL (100 aa). Positions 82-99 are enriched in pro residues; sequence QPFPQQPQQPYPQQPQQP. Composition is skewed to low complexity over residues 100–117 and 125–137; these read FPQT…KQPQ and QPQQ…QPSL.

It belongs to the gliadin/glutenin family.

Functionally, gliadin is the major seed storage protein in wheat. This chain is Gamma-gliadin B, found in Triticum aestivum (Wheat).